The following is a 242-amino-acid chain: Eukaryotic translation initiation factor 3 subunit J (242 aa).

Residues 1–10 show a composition bias toward acidic residues; that stretch reads MASWDDEDFE. 3 disordered regions span residues 1–58, 71–97, and 201–242; these read MASW…KAQR, MKLK…MMNA, and REEK…DDFM. Low complexity predominate over residues 11 to 21; it reads VPAAATPAVPA. Residues 23-38 show a composition bias toward acidic residues; that stretch reads WDDDEEEDVMDSWDAE. The span at 71–89 shows a compositional bias: basic and acidic residues; that stretch reads MKLKPEDASTKRDRQRQAE.

The protein belongs to the eIF-3 subunit J family. In terms of assembly, component of the eukaryotic translation initiation factor 3 (eIF-3) complex.

It localises to the cytoplasm. Its function is as follows. Component of the eukaryotic translation initiation factor 3 (eIF-3) complex, which is involved in protein synthesis of a specialized repertoire of mRNAs and, together with other initiation factors, stimulates binding of mRNA and methionyl-tRNAi to the 40S ribosome. The eIF-3 complex specifically targets and initiates translation of a subset of mRNAs involved in cell proliferation. This chain is Eukaryotic translation initiation factor 3 subunit J, found in Yarrowia lipolytica (strain CLIB 122 / E 150) (Yeast).